The chain runs to 331 residues: Biotin synthase (331 aa).

A Radical SAM core domain is found at 40–269 (YRVQLASLLS…HARVRLSAGR (230 aa)). [4Fe-4S] cluster-binding residues include C55, C59, and C62. Residues C100, C132, C192, and R264 each contribute to the [2Fe-2S] cluster site.

Belongs to the radical SAM superfamily. Biotin synthase family. In terms of assembly, homodimer. It depends on [4Fe-4S] cluster as a cofactor. [2Fe-2S] cluster serves as cofactor.

The enzyme catalyses (4R,5S)-dethiobiotin + (sulfur carrier)-SH + 2 reduced [2Fe-2S]-[ferredoxin] + 2 S-adenosyl-L-methionine = (sulfur carrier)-H + biotin + 2 5'-deoxyadenosine + 2 L-methionine + 2 oxidized [2Fe-2S]-[ferredoxin]. The protein operates within cofactor biosynthesis; biotin biosynthesis; biotin from 7,8-diaminononanoate: step 2/2. In terms of biological role, catalyzes the conversion of dethiobiotin (DTB) to biotin by the insertion of a sulfur atom into dethiobiotin via a radical-based mechanism. This is Biotin synthase from Synechococcus sp. (strain CC9605).